The following is a 1065-amino-acid chain: MRRWGLWEQETNVHTVAESDNFQSFPDRVEILCLTGTESFDVKGQQLIKTLQKGFPTKFLSSQMSSKFGLAGGIPERRVRPIWDAIDSRQFKNALKLVTSLLAKYPKSPYALALKALIHERMGKTDEALSVCLDAKELLYKDDLALMDDLTLSTLQIVLQRLDHLDLATSCYAHACGKYPNNLELMMGLFNCYVREYSFVKQQQTAIKMYKLAGEERFLLWAVCSIQLQVLCDKSGEKLLLLAEGLLKKHIASHSMHEPEALMVYISLLEQQSKYNDALEVLSGDLGSLLMIEVDKLRIQGRLLARANDYSAAVDVYKKILELSPDDWECFLHYLGCLLEDDSIWKYFDNIDQIHPTKHIECKFSHLTEEMFDSRISSASDLVQKLQRDAENSNLRGPYLAELEIEKRKFLFGKKNEDKLLESLLQYFLKFGHLACYASDVEAYLQVLSPNKKAGFVEMLVKNSDSSASATKVLGQTTTILKVQELTGNIFGLPTDEIEASAVKLAKLYCQNLSLSKDLDPQESMFGEELLSLISNMLVQLFWRTRDFGYLAEAIMVLELGLTIRGHVWQYKILLLHIYSYVGALPLAFERYKALDVKNILTETVSHHILRQMLESPMWVDLSNLLKDYLKFMDDHLRESADLTFLAYRHRNYSKVIEFVLFKQRLQHSNQYQAARVEASVLQLKQNADSFEEEERILENLKSGVQLVELSNEIGSRTLKFNEDMQTRPWWTPCPEKNYLLGPFEEISYCPPKENVKEEREENMKRAIQRKSLLPRMIYLSIQCTPTALKESVETNGSGGDIDVCEELKCLLEDYTKMLGCSLSDAVEMITEISQGARTSESLGSNLVDWLNFAVFWNAWSLSSQEHWHVLNSLFERLILDRVRSMGSSDMSSCYSDVQVLVQIITEPLAWHSLIIQACTRSSLPSGKKKKKNQHSDQLSSSPISQAIKDSIQLLCSTIQDVSNWLLNQLNNPEDGQVEGFLTTLKRDGNAAGPGQILGVLESFIASSEESEVGNRIFQALKSWNTADTARKTVMAQQRVLREFLQICESKRKLLETLKQQMSHV.

The stretch at V294 to D327 is one TPR repeat.

Belongs to the MDM20/NAA25 family. In terms of tissue distribution, ubiquitously expressed, with a higher expression in vascular bundles, hydathodes, leaf primordia and the base of the trichomes.

It localises to the cytoplasm. In terms of biological role, auxiliary subunit of the NatB N-alpha-acetyltransferase complex. Required for flowering time regulation and for vegetative and reproductive plant development. This chain is N-terminal acetyltransferase B complex auxiliary subunit NAA25, found in Arabidopsis thaliana (Mouse-ear cress).